The chain runs to 504 residues: Terminase, large subunit (504 aa).

An ATPase activity region spans residues 1 to 204 (MTRGERVIAF…LSIWIDDAVK (204 aa)). The Walker A motif signature appears at 54-61 (IARKNGKT). The Walker B motif motif lies at 149–154 (LAILDE). The tract at residues 326–415 (FPFFWTPQKT…LPLVEFGQGF (90 aa)) is nuclease activity. Asp-471 contacts Mg(2+).

It belongs to the Hendrixvirinae large terminase family. Homopentamer; forms a ring-like structure through which genomic DNA is translocated into the capsid. Interacts with the terminase small subunit; the active complex is composed of a pentamer ring of terminase large subunits and a nonamer ring of terminase small subunits. Interacts with the portal protein; this interaction allows the packaging of viral DNA. Requires Mg(2+) as cofactor. Mn(2+) is required as a cofactor.

Inhibited by zinc. Functionally, the terminase large subunit acts as an ATP driven molecular motor necessary for viral DNA translocation into empty capsids and as an endonuclease that cuts the viral genome from the concetamer to initiate and to end a packaging reaction. The terminase lies at a unique vertex of the procapsid and is composed of two subunits, a small terminase subunit involved in viral DNA recognition (packaging sequence), and a large terminase subunit possessing endonucleolytic and ATPase activities. Both terminase subunits heterooligomerize and are docked on the portal protein to form the packaging machine. Packaging initiates by TerS recognizing the packaging sequence in the viral DNA. The nuclease activity of TerL cuts the viral DNA and the terminase-DNA complex binds to the portal of a procapsid shell. DNA is translocated into the capsid, powered by the packaging ATPase in TerL, which continues until the next site is encountered at which point the motor stops and again cuts the DNA to release the nucleocapsid filled with a unit-length genome ('unit length' packaging). The sequence is that of Terminase, large subunit (2) from Escherichia coli (Bacteriophage HK97).